The chain runs to 417 residues: RH-like protein (417 aa).

11 consecutive transmembrane segments (helical) span residues 12-32 (CLPL…FFFT), 44-64 (LVAS…GLGF), 77-97 (VAFN…LDGF), 125-145 (ISMN…MELV), 172-192 (IHVF…KPLP), 203-223 (TSPS…WPTF), 238-258 (VFST…VSSL), 265-285 (INMT…SASC), 287-307 (VIHS…ISIG), 331-351 (TFGL…ALRV), and 358-378 (MIGF…AMSI).

Belongs to the ammonium transporter (TC 2.A.49) family. Rh subfamily.

Its subcellular location is the membrane. Its function is as follows. May be part of an oligomeric complex which is likely to have a transport or channel function in the erythrocyte membrane. This Macaca mulatta (Rhesus macaque) protein is RH-like protein.